Here is a 356-residue protein sequence, read N- to C-terminus: Tyrosine recombinase XerS (356 aa).

The region spanning 16 to 121 is the Core-binding (CB) domain; it reads LMPWYVLEYY…ALSSLYKYLT (106 aa). A Tyr recombinase domain is found at 169 to 354; sequence GFLTYIDQEH…VNDEQKNALD (186 aa). Residues R210, K234, H306, R309, and H332 contribute to the active site. The active-site O-(3'-phospho-DNA)-tyrosine intermediate is the Y341.

This sequence belongs to the 'phage' integrase family. XerS subfamily.

The protein resides in the cytoplasm. With respect to regulation, ftsK is required for recombination. Its function is as follows. Site-specific tyrosine recombinase, which acts by catalyzing the cutting and rejoining of the recombining DNA molecules. Essential to convert dimers of the bacterial chromosome into monomers to permit their segregation at cell division. This chain is Tyrosine recombinase XerS, found in Streptococcus pneumoniae serotype 19F (strain G54).